The chain runs to 497 residues: Signal recognition particle subunit SRP54 2 (497 aa).

A G-domain region spans residues 1-297; the sequence is MVLAELGGRI…DAKPFVSRLL (297 aa). GTP-binding positions include 108–117, 192–196, and 250–253; these read GLQGEVLEKP, DTSGR, and TKMD. An M-domain region spans residues 298–497; that stretch reads GNGDMSGFVN…LMGMFGGRDE (200 aa).

The protein belongs to the GTP-binding SRP family. SRP54 subfamily. As to quaternary structure, component of a signal recognition particle (SRP) complex that consists of a 7SL RNA molecule of 300 nucleotides and six protein subunits: SRP72, SRP68, SRP54, SRP19, SRP14 and SRP9.

Its subcellular location is the cytoplasm. It is found in the endoplasmic reticulum. It catalyses the reaction GTP + H2O = GDP + phosphate + H(+). Functionally, component of the signal recognition particle (SRP) complex, a ribonucleoprotein complex that mediates the cotranslational targeting of secretory and membrane proteins to the endoplasmic reticulum (ER). As part of the SRP complex, associates with the SRP receptor (SR) component SRPRA to target secretory proteins to the endoplasmic reticulum membrane. Binds to the signal sequence of presecretory proteins when they emerge from the ribosomes. Displays basal GTPase activity, and stimulates reciprocal GTPase activation of the SR subunit SRPRA. Forms a guanosine 5'-triphosphate (GTP)-dependent complex with the SR subunit SRPRA. SR compaction and GTPase mediated rearrangement of SR drive SRP-mediated cotranslational protein translocation into the ER. Requires the presence of SRP9/SRP14 and/or SRP19 to stably interact with RNA. The protein is Signal recognition particle subunit SRP54 2 (SRP-54B) of Arabidopsis thaliana (Mouse-ear cress).